The primary structure comprises 447 residues: uncharacterized protein (447 aa).

The protein to E.coli plasmid IncP-alpha RP4 protein TraN.

This is an uncharacterized protein from Haemophilus influenzae (strain ATCC 51907 / DSM 11121 / KW20 / Rd).